The primary structure comprises 197 residues: Imidazoleglycerol-phosphate dehydratase (197 aa).

Belongs to the imidazoleglycerol-phosphate dehydratase family.

Its subcellular location is the cytoplasm. The enzyme catalyses D-erythro-1-(imidazol-4-yl)glycerol 3-phosphate = 3-(imidazol-4-yl)-2-oxopropyl phosphate + H2O. It functions in the pathway amino-acid biosynthesis; L-histidine biosynthesis; L-histidine from 5-phospho-alpha-D-ribose 1-diphosphate: step 6/9. In Syntrophobacter fumaroxidans (strain DSM 10017 / MPOB), this protein is Imidazoleglycerol-phosphate dehydratase.